A 916-amino-acid chain; its full sequence is Protein prickle (916 aa).

Disordered regions lie at residues 49 to 105 (PLSP…AGGS) and 127 to 176 (QHLQ…IPVD). The segment covering 145 to 156 (SSPSPALSSSIT) has biased composition (low complexity). The segment covering 157-171 (TGGGGVTRGGGGGGH) has biased composition (gly residues). The region spanning 167–275 (GGGGHIIPVD…TVKQLATNQI (109 aa)) is the PET domain. LIM zinc-binding domains are found at residues 274–338 (QICD…ETLK), 339–399 (PRCS…MFAE), and 400–462 (YCDF…GEPP). 4 disordered regions span residues 460–593 (EPPT…PNHR), 635–671 (VIPG…QPQS), 692–725 (DAIQ…ENLP), and 763–870 (RSKS…DTVY). Polar residues-rich tracts occupy residues 507 to 517 (SPISERSTPHS), 526 to 569 (EMST…SRTL), and 642 to 654 (AKTN…SMPE). Residues 655–671 (LSQSLQQQQQQQQQPQS) are compositionally biased toward low complexity. The segment covering 777–793 (RSSKSKRRSSHHHQHHR) has biased composition (basic residues). Residues 796–805 (GESSSYSGTS) are compositionally biased toward low complexity. The segment covering 829-844 (VPDVEFIEHQDHHRGD) has biased composition (basic and acidic residues). Residues 852–867 (RSVCSTCSSSSSSADD) show a composition bias toward low complexity.

Belongs to the prickle / espinas / testin family. Interacts with dsh; PET and LIM domains interact with dsh DEP domain, in wing cells. Interacts with Vang in photoreceptor cells.

It localises to the cell membrane. In terms of biological role, acts in a planar cell polarity (PCP) complex; polarization along the apical/basal axis of epithelial cells. PCP signaling in the wing disk requires the receptor fz and the cytoplasmic proteins dsh and pk. These act in a feedback loop leading to activation of the jnk cascade and subsequent polarized arrangement of hairs and bristles. Dgo and pk compete with one another for dsh binding, thereby modulating fz dsh activity and ensuring tight control over fz PCP signaling. Vang, stan and pk function together to regulate the establishment of tissue polarity in the adult eye. The polypeptide is Protein prickle (Aedes aegypti (Yellowfever mosquito)).